The primary structure comprises 365 residues: MKLSDFDFDLPSELIAQYPSSERDNSDLLIAVTPLIKTKFYNIIDYLKEGDLLVFNNSKVIKAKLNLGKNITINLNQKLSDDSWSAFAKPARKLHVNDEFYFDNHKVIITEKLAMGEIKVKFELNDISVFEFLNKYGEMPLPVYIRRSHSLCHPVATTTGSKTYLNNDWIPWSNHGMTNTQNDNDRYQTVYSQIEGSVAAPTAGLHFTKDILDKLKAEGIQATFLTLHVGAGTFLPVKTENIHEHKMHTEYCSITPDTAEIINKAKQEGKRIIAVGTTTLRTLESSCNNGIVKAGSFKTDIFITPGFKFQTADMLLTNFHFPKSTLFMLICAFAGFKEMHELYKYAIKEAMRFFSYGDATLLCRK.

The protein belongs to the QueA family. As to quaternary structure, monomer.

It is found in the cytoplasm. It catalyses the reaction 7-aminomethyl-7-carbaguanosine(34) in tRNA + S-adenosyl-L-methionine = epoxyqueuosine(34) in tRNA + adenine + L-methionine + 2 H(+). Its pathway is tRNA modification; tRNA-queuosine biosynthesis. Transfers and isomerizes the ribose moiety from AdoMet to the 7-aminomethyl group of 7-deazaguanine (preQ1-tRNA) to give epoxyqueuosine (oQ-tRNA). The sequence is that of S-adenosylmethionine:tRNA ribosyltransferase-isomerase from Rickettsia peacockii (strain Rustic).